We begin with the raw amino-acid sequence, 270 residues long: uncharacterized protein (270 aa).

Residues Asp53, His55, Asp83, Asn116, His207, and His209 each coordinate a divalent metal cation.

The protein belongs to the metallophosphoesterase superfamily. It depends on a divalent metal cation as a cofactor.

This is an uncharacterized protein from Bacillus subtilis (strain 168).